Consider the following 739-residue polypeptide: Nucleoprotein (739 aa).

The stretch at 334–363 (VNVGEQYQQLREAATEAEKQLQQYAESREL) forms a coiled coil. The disordered stretch occupies residues 415–646 (PKTSGHYDDD…QDSDNTQPEH (232 aa)). Low complexity-rich tracts occupy residues 449-458 (SQDTTIPDVV) and 504-514 (KGGQQKNSQKG). The span at 520-530 (RQTQSRPTQNV) shows a compositional bias: polar residues. Positions 567–579 (EEADPLDDADDET) are enriched in acidic residues. The segment covering 611 to 638 (YRDHSEKRELPQDEQQDQDHTQEARNQD) has biased composition (basic and acidic residues).

Belongs to the filoviruses nucleoprotein family. As to quaternary structure, homooligomer. Homomultimerizes to form the nucleocapsid. Binds to viral genomic RNA. Interacts with VP35 and VP30 to form the nucleocapsid. Interacts with host PPP2R5C; this interaction leads to VP30 dephosphorylation and viral transcription. Interacts with VP24; this interaction facilitates nucleocapsid assembly and genome packaging. Interacts with matrix protein VP40; this interaction allows recruitment of the nucleocapsid into progeny virions. Interacts with host STAU1. Interacts with host NXF1 (via RNA-binding domain); this interaction recruits NXF1 to the inclusion bodies were viral replication takes place, probably to export viral mRNA-NXF1 complexes from these sites. Interacts with host CCDC92; this interaction sequesters NP in the host cytoplasm. Interacts with host TRIM14. In terms of processing, phosphorylated and O-glycosylated by host. Acetylated by host EP300 in vitro.

It is found in the virion. The protein resides in the host cytoplasm. Functionally, oligomerizes into helical capsid to encapsidate the viral genome, protecting it from nucleases and the cellular innate immune response. VP35 binds to and stabilizes monomeric NP, keeping it soluble. Upon virus replication, NP is recruited to bind cooperatively viral genomic RNA and VP35 is released. The encapsidated genomic RNA is termed the nucleocapsid and serves as template for transcription and replication. The nucleocapsid is helical with a pitch of 10.81 NP per turn and a diameter of about 22nm. Each NP binds to six nucleotides of viral genomic RNA, three being exposed to the solvant and three hidden into the nucleocapsid. Also recruits host PPP2R5C phosphatase to dephosphorylate VP30 and thereby promote viral transcription. Upon virion assembly and budding, NP binds to VP24 and possibly host STAU1. This chain is Nucleoprotein (NP), found in Epomops franqueti (Franquet's epauletted fruit bat).